A 138-amino-acid polypeptide reads, in one-letter code: Basic phospholipase A2 Cll-N6 (138 aa).

A signal peptide spans 1-16; that stretch reads MRTFWIVAVLLVGVEG. Cystine bridges form between Cys42/Cys131, Cys44/Cys60, Cys59/Cys111, Cys65/Cys138, Cys66/Cys104, Cys73/Cys97, and Cys91/Cys102. Ca(2+)-binding residues include Tyr43, Gly45, and Gly47. His63 is a catalytic residue. Asp64 is a Ca(2+) binding site. Asp105 is a catalytic residue.

In terms of assembly, monomer. It depends on Ca(2+) as a cofactor. As to expression, expressed by the venom gland.

The protein resides in the secreted. The catalysed reaction is a 1,2-diacyl-sn-glycero-3-phosphocholine + H2O = a 1-acyl-sn-glycero-3-phosphocholine + a fatty acid + H(+). In terms of biological role, snake venom phospholipase A2 (PLA2) that shows myotoxic activities. PLA2 catalyzes the calcium-dependent hydrolysis of the 2-acyl groups in 3-sn-phosphoglycerides. This chain is Basic phospholipase A2 Cll-N6, found in Crotalus lepidus lepidus (Mottled rock rattlesnake).